A 69-amino-acid chain; its full sequence is DNA-directed RNA polymerase subunit omega (69 aa).

The protein belongs to the RNA polymerase subunit omega family. As to quaternary structure, the RNAP catalytic core consists of 2 alpha, 1 beta, 1 beta' and 1 omega subunit. When a sigma factor is associated with the core the holoenzyme is formed, which can initiate transcription.

It catalyses the reaction RNA(n) + a ribonucleoside 5'-triphosphate = RNA(n+1) + diphosphate. Promotes RNA polymerase assembly. Latches the N- and C-terminal regions of the beta' subunit thereby facilitating its interaction with the beta and alpha subunits. The sequence is that of DNA-directed RNA polymerase subunit omega from Pediococcus pentosaceus (strain ATCC 25745 / CCUG 21536 / LMG 10740 / 183-1w).